The primary structure comprises 351 residues: Carbamoyl phosphate synthase small chain (351 aa).

The interval 1 to 171 is CPSase; it reads MKGIIYLEDG…IIHIAGNGNK (171 aa). L-glutamine-binding residues include Ser-45, Gly-219, and Gly-221. The Glutamine amidotransferase type-1 domain maps to 171–351; it reads KVAVMDFGIK…TYLFDQFVNL (181 aa). Cys-246 acts as the Nucleophile in catalysis. The L-glutamine site is built by Leu-247, Gln-250, Asn-288, Gly-290, and Tyr-291. Residues His-331 and Glu-333 contribute to the active site.

Belongs to the CarA family. As to quaternary structure, composed of two chains; the small (or glutamine) chain promotes the hydrolysis of glutamine to ammonia, which is used by the large (or ammonia) chain to synthesize carbamoyl phosphate. Tetramer of heterodimers (alpha,beta)4.

It catalyses the reaction hydrogencarbonate + L-glutamine + 2 ATP + H2O = carbamoyl phosphate + L-glutamate + 2 ADP + phosphate + 2 H(+). The enzyme catalyses L-glutamine + H2O = L-glutamate + NH4(+). It participates in amino-acid biosynthesis; L-arginine biosynthesis; carbamoyl phosphate from bicarbonate: step 1/1. It functions in the pathway pyrimidine metabolism; UMP biosynthesis via de novo pathway; (S)-dihydroorotate from bicarbonate: step 1/3. Its function is as follows. Small subunit of the glutamine-dependent carbamoyl phosphate synthetase (CPSase). CPSase catalyzes the formation of carbamoyl phosphate from the ammonia moiety of glutamine, carbonate, and phosphate donated by ATP, constituting the first step of 2 biosynthetic pathways, one leading to arginine and/or urea and the other to pyrimidine nucleotides. The small subunit (glutamine amidotransferase) binds and cleaves glutamine to supply the large subunit with the substrate ammonia. This is Carbamoyl phosphate synthase small chain from Clostridium acetobutylicum (strain ATCC 824 / DSM 792 / JCM 1419 / IAM 19013 / LMG 5710 / NBRC 13948 / NRRL B-527 / VKM B-1787 / 2291 / W).